We begin with the raw amino-acid sequence, 172 residues long: Resuscitation-promoting factor RpfE (172 aa).

The first 28 residues, 1-28, serve as a signal peptide directing secretion; that stretch reads MKNARTTLIAAAIAGTLVTTSPAGIANA. Residues 33–89 form a disordered region; that stretch reads LDPNAAAGPDAVGFDPNLPPAPDAAPVDTPPAPEDAGFDPNLPPPLAPDFLSPPAEE. Residues 49–65 are compositionally biased toward pro residues; that stretch reads NLPPAPDAAPVDTPPAP.

It belongs to the transglycosylase family. Rpf subfamily. In terms of assembly, interacts with RipA.

Its function is as follows. Factor that stimulates resuscitation of dormant cells. Has peptidoglycan (PG) hydrolytic activity. Active in the pM concentration range. Has little to no effect on actively-growing cells. PG fragments could either directly activate the resuscitation pathway of dormant bacteria or serve as a substrate for endogenous Rpf, resulting in low molecular weight products with resuscitation activity. Functionally, stimulates growth of stationary phase M.bovis (a slow-growing Mycobacterium), reduces the lag phase of diluted fast-growers M.smegmatis and Micrococcus luteus. Sequential gene disruption indicates RpfB and RpfE are higher than RpfD and RpfC in functional hierarchy. This is Resuscitation-promoting factor RpfE (rpfE) from Mycobacterium tuberculosis (strain ATCC 25618 / H37Rv).